Reading from the N-terminus, the 284-residue chain is 8-methylmenaquinol:fumarate reductase membrane anchor subunit (284 aa).

In terms of assembly, the MFR complex is composed of three subunits: a flavoprotein (SdhA), an iron-sulfur protein (SdhB), and one hydrophobic anchor protein (SdhE).

It is found in the periplasm. The protein localises to the cell membrane. The enzyme catalyses 8-methylmenaquinone-6 + succinate = 8-methylmenaquinol-6 + fumarate. Its function is as follows. Membrane anchor subunit of 8-methylmenaquinol:fumarate reductase (MFR), that catalyzes the reduction of fumarate using 8-methylmenaquinol-6 as electron donor. The complex shows no succinate oxidation activity. Is involved in anaerobic metabolism. SdhE likely contains the quinol/quinone binding site. The polypeptide is 8-methylmenaquinol:fumarate reductase membrane anchor subunit (Wolinella succinogenes (strain ATCC 29543 / DSM 1740 / CCUG 13145 / JCM 31913 / LMG 7466 / NCTC 11488 / FDC 602W) (Vibrio succinogenes)).